We begin with the raw amino-acid sequence, 435 residues long: Mitochondrial association factor 1 form b0 (435 aa).

The N-terminal stretch at M1–G27 is a signal peptide. Residues S28–R96 are Vacuolar-facing. A disordered region spans residues G43–A89. The span at V55–E64 shows a compositional bias: basic and acidic residues. A helical transmembrane segment spans residues I97 to R117. The Cytoplasmic portion of the chain corresponds to R118 to D435. Residues R120–S162 form a disordered region.

The protein localises to the parasitophorous vacuole membrane. Its function is as follows. During host cell infection by tachyzoites, does not play a role in tethering the parasitophorous vacuole to the host mitochondria. The polypeptide is Mitochondrial association factor 1 form b0 (Toxoplasma gondii).